Reading from the N-terminus, the 263-residue chain is Phosphatidylglycerol--prolipoprotein diacylglyceryl transferase (263 aa).

4 helical membrane passes run 7–27, 50–70, 85–105, and 112–132; these read IFSI…LGIV, LLTA…VLIY, TWKG…AVII, and IPIF…LFLG. R133 contributes to the a 1,2-diacyl-sn-glycero-3-phospho-(1'-sn-glycerol) binding site. 3 helical membrane-spanning segments follow: residues 169–189, 197–217, and 233–253; these read LYEA…LFFL, GTLT…VEFF, and MGQL…LSAL.

The protein belongs to the Lgt family.

The protein resides in the cell membrane. It catalyses the reaction L-cysteinyl-[prolipoprotein] + a 1,2-diacyl-sn-glycero-3-phospho-(1'-sn-glycerol) = an S-1,2-diacyl-sn-glyceryl-L-cysteinyl-[prolipoprotein] + sn-glycerol 1-phosphate + H(+). It functions in the pathway protein modification; lipoprotein biosynthesis (diacylglyceryl transfer). Catalyzes the transfer of the diacylglyceryl group from phosphatidylglycerol to the sulfhydryl group of the N-terminal cysteine of a prolipoprotein, the first step in the formation of mature lipoproteins. This chain is Phosphatidylglycerol--prolipoprotein diacylglyceryl transferase, found in Wolbachia sp. subsp. Brugia malayi (strain TRS).